The chain runs to 214 residues: tRNA (guanine-N(7)-)-methyltransferase (214 aa).

Glu44, Glu69, Asp96, and Asp118 together coordinate S-adenosyl-L-methionine. Asp118 is an active-site residue. Lys122 provides a ligand contact to substrate. Residues 124–129 form an interaction with RNA region; the sequence is RHEKRR. Substrate-binding positions include Asp154 and 192-195; that span reads TEYE.

Belongs to the class I-like SAM-binding methyltransferase superfamily. TrmB family.

It catalyses the reaction guanosine(46) in tRNA + S-adenosyl-L-methionine = N(7)-methylguanosine(46) in tRNA + S-adenosyl-L-homocysteine. Its pathway is tRNA modification; N(7)-methylguanine-tRNA biosynthesis. Its function is as follows. Catalyzes the formation of N(7)-methylguanine at position 46 (m7G46) in tRNA. The protein is tRNA (guanine-N(7)-)-methyltransferase of Lactiplantibacillus plantarum (strain ATCC BAA-793 / NCIMB 8826 / WCFS1) (Lactobacillus plantarum).